The following is a 150-amino-acid chain: Probable host range protein 2 (150 aa).

Belongs to the orthopoxvirus OPG027 family.

Inhibits antiviral activity induced by type I interferons. Does not block signal transduction of IFN, but is important to counteract the host antiviral state induced by a pre-treatment with IFN. The sequence is that of Probable host range protein 2 (OPG027) from Camelpox virus (strain M-96).